We begin with the raw amino-acid sequence, 250 residues long: HTH-type transcriptional regulator KipR (250 aa).

Residues 5-65 form the HTH iclR-type domain; that stretch reads NKTVVKSMAL…DASGAYSLGL (61 aa). The H-T-H motif DNA-binding region spans 26 to 45; the sequence is LSELVSLTGMPKTSVHRMVS. Residues 80–249 form the IclR-ED domain; it reads IRKIAKPVME…ALQISRKIGY (170 aa).

In terms of biological role, transcriptional repressor of the kip gene-containing operon. The polypeptide is HTH-type transcriptional regulator KipR (kipR) (Bacillus subtilis (strain 168)).